The chain runs to 305 residues: N-acetylneuraminate lyase 2 (305 aa).

Residues S47 and T48 each contribute to the aceneuramate site. Y137 functions as the Proton donor in the catalytic mechanism. Residue K165 is the Schiff-base intermediate with substrate of the active site. The aceneuramate site is built by T167, G189, D191, E192, and S208.

Belongs to the DapA family. NanA subfamily. In terms of assembly, homotetramer.

The protein localises to the cytoplasm. It catalyses the reaction aceneuramate = aldehydo-N-acetyl-D-mannosamine + pyruvate. Its pathway is amino-sugar metabolism; N-acetylneuraminate degradation; D-fructose 6-phosphate from N-acetylneuraminate: step 1/5. Functionally, catalyzes the reversible aldol cleavage of N-acetylneuraminic acid (sialic acid; Neu5Ac) to form pyruvate and N-acetylmannosamine (ManNAc) via a Schiff base intermediate. The protein is N-acetylneuraminate lyase 2 of Escherichia coli O6:H1 (strain CFT073 / ATCC 700928 / UPEC).